Reading from the N-terminus, the 744-residue chain is Cytoskeleton-associated protein 2-like (744 aa).

Disordered regions lie at residues Tyr35–Lys56, Leu76–Glu169, Lys182–Ala216, Thr317–Gly337, and Asn428–Thr452. Composition is skewed to polar residues over residues Leu76–Ser86, Ser102–Gly129, and Gly137–Gln154. Lys195 is covalently cross-linked (Glycyl lysine isopeptide (Lys-Gly) (interchain with G-Cter in SUMO1); alternate). Lys195 is covalently cross-linked (Glycyl lysine isopeptide (Lys-Gly) (interchain with G-Cter in SUMO2); alternate). Positions Glu199–Ala216 are enriched in polar residues. At Ser744 the chain carries Phosphoserine.

This sequence belongs to the CKAP2 family. Ubiquitinated by the anaphase promoting complex/cyclosome (APC/C).

Its subcellular location is the cytoplasm. It localises to the cytoskeleton. It is found in the spindle pole. Microtubule-associated protein required for mitotic spindle formation and cell-cycle progression in neural progenitor cells. This is Cytoskeleton-associated protein 2-like (CKAP2L) from Bos taurus (Bovine).